We begin with the raw amino-acid sequence, 133 residues long: Profilin (133 aa).

Belongs to the profilin family.

In terms of biological role, more likely to influence phosphoinositide metabolism than actin assembly. The chain is Profilin from Cowpox virus (strain GRI-90 / Grishak) (CPV).